Consider the following 333-residue polypeptide: Holliday junction branch migration complex subunit RuvB (333 aa).

The large ATPase domain (RuvB-L) stretch occupies residues 1-182 (MEERLVSGDV…FGVISRLEYY (182 aa)). Residues Leu21, Arg22, Gly63, Lys66, Thr67, Thr68, 129–131 (EDY), Arg172, Tyr182, and Arg219 each bind ATP. Residue Thr67 participates in Mg(2+) binding. Residues 183–253 (TTEHLTQIVM…LAKEALELLQ (71 aa)) are small ATPAse domain (RuvB-S). The interval 256-333 (RLGLDHIDHK…EHFGMEVPKQ (78 aa)) is head domain (RuvB-H). DNA is bound by residues Arg311 and Arg316.

It belongs to the RuvB family. As to quaternary structure, homohexamer. Forms an RuvA(8)-RuvB(12)-Holliday junction (HJ) complex. HJ DNA is sandwiched between 2 RuvA tetramers; dsDNA enters through RuvA and exits via RuvB. An RuvB hexamer assembles on each DNA strand where it exits the tetramer. Each RuvB hexamer is contacted by two RuvA subunits (via domain III) on 2 adjacent RuvB subunits; this complex drives branch migration. In the full resolvosome a probable DNA-RuvA(4)-RuvB(12)-RuvC(2) complex forms which resolves the HJ.

It is found in the cytoplasm. It carries out the reaction ATP + H2O = ADP + phosphate + H(+). Its function is as follows. The RuvA-RuvB-RuvC complex processes Holliday junction (HJ) DNA during genetic recombination and DNA repair, while the RuvA-RuvB complex plays an important role in the rescue of blocked DNA replication forks via replication fork reversal (RFR). RuvA specifically binds to HJ cruciform DNA, conferring on it an open structure. The RuvB hexamer acts as an ATP-dependent pump, pulling dsDNA into and through the RuvAB complex. RuvB forms 2 homohexamers on either side of HJ DNA bound by 1 or 2 RuvA tetramers; 4 subunits per hexamer contact DNA at a time. Coordinated motions by a converter formed by DNA-disengaged RuvB subunits stimulates ATP hydrolysis and nucleotide exchange. Immobilization of the converter enables RuvB to convert the ATP-contained energy into a lever motion, pulling 2 nucleotides of DNA out of the RuvA tetramer per ATP hydrolyzed, thus driving DNA branch migration. The RuvB motors rotate together with the DNA substrate, which together with the progressing nucleotide cycle form the mechanistic basis for DNA recombination by continuous HJ branch migration. Branch migration allows RuvC to scan DNA until it finds its consensus sequence, where it cleaves and resolves cruciform DNA. The polypeptide is Holliday junction branch migration complex subunit RuvB (Geobacillus sp. (strain WCH70)).